The chain runs to 405 residues: MSSAVLLLLVCGCALAVLSPVAYGAPMDTDDRPVWDSIRLCDIPNEPNPGQCMLPAECVAYGKINDVSSLSSIERFSFIKQIQCNGSDTVPYVCCPRDSDAYREPYVNETMVPKNRVASRIAFDADSCGIQSYVAKIRGGQLAEIDEFPWMAMLLYERDNNALTQGCGGALISRTYVITAAHCVTGKNFQQTKGRLKFVRLREYNIHTNPDCVYENDLKDCSDDMIDLVPQAVIPHPEYDSESSNQQHDIALIRIEQTPPFTDFLRSICLPEQNFESSATPGKKLSVSGWGRTDIFKDNLGPDVLSPIKLKLSLPYVEREKCSKTFRPWSFALGPGQMCAGGERAKDTCAGDSGSPLMSYDMKRAIWYITGIVSLGVRGCGVEGLPGVYTNVHHYLPWIKMYTGA.

The signal sequence occupies residues 1–24; sequence MSSAVLLLLVCGCALAVLSPVAYG. 3 disulfide bridges follow: Cys-41–Cys-94, Cys-52–Cys-84, and Cys-58–Cys-95. The region spanning 41–95 is the Clip domain; it reads CDIPNEPNPGQCMLPAECVAYGKINDVSSLSSIERFSFIKQIQCNGSDTVPYVCC. N-linked (GlcNAc...) asparagine glycosylation is found at Asn-85 and Asn-108. In terms of domain architecture, Peptidase S1 spans 137 to 404; that stretch reads IRGGQLAEID…YLPWIKMYTG (268 aa). Residues Cys-167 and Cys-183 are joined by a disulfide bond. Active-site charge relay system residues include His-182 and Asp-249. 2 disulfide bridges follow: Cys-322–Cys-339 and Cys-349–Cys-380. The active-site Charge relay system is Ser-353.

Belongs to the peptidase S1 family. CLIP subfamily. Post-translationally, proteolytic cleavage is necessary for activation. Cleaved and activated by CLIPB4.

It localises to the secreted. Its function is as follows. Serine protease that functions in the melanization-mediated immune response. Preferentially, cleaves substrates with an arginine at the P1 site. May be involved in the activation of the prophenoloxidase cascade upstream of CLIPB9; does not cleave prophenoloxidase. This chain is CLIP domain-containing serine protease B8, found in Anopheles gambiae (African malaria mosquito).